Reading from the N-terminus, the 486-residue chain is MTKITRVSLASPPDGGWGWMIVAGCFLVTICTRAVTRCISIFFVEFQTYFAQDYSQTAWIHSIVDCMTMLCAPLGSVVSNQLSCQAGIMLGGLLASTGFILGSFATSLKHLYLSLGVLTGLGFALCYSPAIAMVGKYFSRRKALAYGIAMSGSGIGTFILAPVVQLLIEQFSWRGALLILGGFVLNLCVCGALMRPITLKEDRSVPEKNHNRESQREDCKQASPYSPLTKECTETRLCCSLQQEYGFLLMSDFVVLAVSVLFMAYGCSPLFVYLVPYALSVGVSHHQAAFLMSILGVIDIVGNITFGWLTDRRCLKNYRYVCYLFAVALDGLCYLCLPMLQTFPLLVPFSCTFGYFDGAYVTLIPVVTAEIVGTTSLSSALGVVYFLHAVPYLVSPPIAGWLVDTTGSYTAAFLLCGFAMIFSSILLGFVRIVKRMKRTQVPFPVKDSDPKLQLWTNGSVAYSVARELDQKDEEPLPKARSGCNLT.

At 1–9 the chain is on the cytoplasmic side; the sequence is MTKITRVSL. The next 12 helical transmembrane spans lie at 10 to 30, 58 to 78, 86 to 106, 115 to 135, 148 to 168, 177 to 197, 253 to 273, 289 to 309, 320 to 340, 353 to 373, 383 to 403, and 410 to 430; these read ASPP…LVTI, AWIH…GSVV, AGIM…SFAT, LGVL…AMVG, IAMS…QLLI, LLIL…MRPI, FVVL…LFVY, AFLM…FGWL, YVCY…LPML, FGYF…EIVG, VVYF…GWLV, and TAAF…LGFV. The Cytoplasmic segment spans residues 431 to 486; that stretch reads RIVKRMKRTQVPFPVKDSDPKLQLWTNGSVAYSVARELDQKDEEPLPKARSGCNLT.

The protein belongs to the major facilitator superfamily. Monocarboxylate porter (TC 2.A.1.13) family. In terms of assembly, interacts with isoform 2 of BSG; this interaction is required for its localization to the plasma membrane. Highly expressed in the lung, liver, kidney, and pancreas. Expressed in eye lens.

The protein localises to the cell membrane. The protein resides in the basolateral cell membrane. It catalyses the reaction creatine(in) = creatine(out). The enzyme catalyses guanidinoacetate(in) = guanidinoacetate(out). Its activity is regulated as follows. Creatine uptake is inhibited by carbonyl cyanide 3-chlorophenylhydrazone (CCCP) and by valinomycin. Its function is as follows. Functions as a transporter for creatine and as well for its precursor guanidinoacetate. Transport of creatine and GAA is independent of resting membrane potential and extracellular Na(+), Cl(-), or pH. Contributes to the process of creatine biosynthesis and distribution. This Mus musculus (Mouse) protein is Monocarboxylate transporter 12.